The following is a 335-amino-acid chain: Ankyrin repeat and SOCS box protein 1 (335 aa).

6 ANK repeats span residues cysteine 36 to glutamate 68, leucine 77 to leucine 106, lysine 110 to glycine 139, histidine 143 to valine 172, leucine 191 to phenylalanine 220, and serine 235 to leucine 265. The 50-residue stretch at leucine 286 to glutamate 335 folds into the SOCS box domain.

This sequence belongs to the ankyrin SOCS box (ASB) family. As to quaternary structure, interacts with CUL5 and RNF7. Interacts with TAB2 and TAB3.

It is found in the cytoplasm. It functions in the pathway protein modification; protein ubiquitination. In terms of biological role, probable substrate-recognition component of a SCF-like ECS (Elongin-Cullin-SOCS-box protein) E3 ligase complex which mediates the ubiquitination and subsequent proteasomal degradation of target proteins. Mediates Notch-induced ubiquitination and degradation of TCF3/E2A and JAK2. Functions as a tumor suppressor by enhancing CHCHD3 'Lys-48'-linked ubiquitination, leading to inhibition of the CHCHD3/ROS signaling pathway. Suppresses TAB2-linked 'Lys-48' polyubiquitination and consequently facilitates the initiation of NF-kappa-B and MAPK signaling cascades. May play a role in testis development. This chain is Ankyrin repeat and SOCS box protein 1 (ASB1), found in Homo sapiens (Human).